The chain runs to 243 residues: Outer membrane protein A (243 aa).

Beta stranded transmembrane passes span 1–8 (LTAKLGYP), 13–21 (LDIYTRLGG), 48–57 (PVFAGGVEWA), 62–69 (IATRLEYQ), and 88–96 (LLSLGVSYR). 4 repeat units span residues 107 to 108 (AP), 109 to 110 (AP), 111 to 112 (AP), and 113 to 114 (AP). The interval 107-114 (APAPAPAP) is 4 X 2 AA tandem repeats of A-P. One can recognise an OmpA-like domain in the interval 116–243 (VQTKHFTLKS…RRVEIEVKGI (128 aa)). Cys-217 and Cys-229 are disulfide-bonded.

The protein belongs to the outer membrane OOP (TC 1.B.6) superfamily. OmpA family. Monomer and homodimer.

It is found in the cell outer membrane. In terms of biological role, with TolR probably plays a role in maintaining the position of the peptidoglycan cell wall in the periplasm. Acts as a porin with low permeability that allows slow penetration of small solutes; an internal gate slows down solute passage. Its function is as follows. Required for conjugation with F-type plasmids; probably serves as the mating receptor on recipient cells. The sequence is that of Outer membrane protein A from Escherichia fergusonii.